We begin with the raw amino-acid sequence, 362 residues long: 3-dehydroquinate synthase (362 aa).

NAD(+)-binding positions include 71-76, 105-109, 129-130, Lys142, Lys151, and 169-172; these read DGEQYK, GVIGD, TT, and CLKT. Zn(2+) contacts are provided by Glu184, His247, and His264.

This sequence belongs to the sugar phosphate cyclases superfamily. Dehydroquinate synthase family. Requires NAD(+) as cofactor. Co(2+) serves as cofactor. It depends on Zn(2+) as a cofactor.

Its subcellular location is the cytoplasm. It catalyses the reaction 7-phospho-2-dehydro-3-deoxy-D-arabino-heptonate = 3-dehydroquinate + phosphate. Its pathway is metabolic intermediate biosynthesis; chorismate biosynthesis; chorismate from D-erythrose 4-phosphate and phosphoenolpyruvate: step 2/7. In terms of biological role, catalyzes the conversion of 3-deoxy-D-arabino-heptulosonate 7-phosphate (DAHP) to dehydroquinate (DHQ). This is 3-dehydroquinate synthase from Salmonella typhi.